A 431-amino-acid polypeptide reads, in one-letter code: Aspartate--tRNA(Asp/Asn) ligase (431 aa).

E170 is a binding site for L-aspartate. The interval 192 to 195 is aspartate; that stretch reads QLYK. An L-aspartate-binding site is contributed by R214. Residues 214–216, 222–224, and E354 contribute to the ATP site; these read RAE and RHL. 2 residues coordinate Mg(2+): E354 and S357. L-aspartate contacts are provided by S357 and R361. 402–405 is a binding site for ATP; sequence GLER.

The protein belongs to the class-II aminoacyl-tRNA synthetase family. Type 2 subfamily. Homodimer. Requires Mg(2+) as cofactor.

It localises to the cytoplasm. The enzyme catalyses tRNA(Asx) + L-aspartate + ATP = L-aspartyl-tRNA(Asx) + AMP + diphosphate. In terms of biological role, aspartyl-tRNA synthetase with relaxed tRNA specificity since it is able to aspartylate not only its cognate tRNA(Asp) but also tRNA(Asn). Reaction proceeds in two steps: L-aspartate is first activated by ATP to form Asp-AMP and then transferred to the acceptor end of tRNA(Asp/Asn). The polypeptide is Aspartate--tRNA(Asp/Asn) ligase (Methanopyrus kandleri (strain AV19 / DSM 6324 / JCM 9639 / NBRC 100938)).